We begin with the raw amino-acid sequence, 95 residues long: Small ribosomal subunit protein bS6 (95 aa).

The protein belongs to the bacterial ribosomal protein bS6 family.

In terms of biological role, binds together with bS18 to 16S ribosomal RNA. This Bacillus velezensis (strain DSM 23117 / BGSC 10A6 / LMG 26770 / FZB42) (Bacillus amyloliquefaciens subsp. plantarum) protein is Small ribosomal subunit protein bS6.